A 435-amino-acid polypeptide reads, in one-letter code: Nuclear receptor subfamily 6 group A member 1 (435 aa).

A DNA-binding region (nuclear receptor) is located at residues 11–86; sequence QRACLICGDR…MGMNRKAIRE (76 aa). NR C4-type zinc fingers lie at residues 14–34 and 50–69; these read CLIC…CEGC and CSRD…CQYC. The interval 84–158 is disordered; sequence IREDGMPGGR…STPSSSRSME (75 aa). The span at 121-141 shows a compositional bias: polar residues; that stretch reads NTSWSNNGDSDHSSPGNAVSE. Residues 142–156 are compositionally biased toward low complexity; it reads SNQPSPVSTPSSSRS. The NR LBD domain maps to 204-435; sequence QSHTLINQLL…HSCKTIVTKE (232 aa).

Belongs to the nuclear hormone receptor family. NR6 subfamily. In terms of assembly, homodimer. As to expression, transiently expressed in differentiating cells of all embryonic germ layers. Expressed in an anterior to posterior concentration gradient from late gastrula to midneurula stages. Shows a complicated spatio-temporal pattern of expression during neurulation, being predominant in the neural plate and neural crest in midneurula embryos. At late tailbud (stage 30), mainly expressed in the head mesenchyme, gill arches and tail tip. Expression persists in the epidermis, somites and endoderm, and in the central nervous system, expression is restricted to the midbrain, hindbrain and part of the spinal cord. Isoforms Oo and Em are both expressed in the brain and isoform Oo is expressed in the germ cells of both the adult testis and ovary.

The protein localises to the cytoplasm. The protein resides in the nucleus. Functionally, probable orphan nuclear receptor. Binds to a response element containing repeats of the motif 5'-AGGTCA-3'. Required for anterior-posterior patterning during organogenesis. Acts with chordin to play a role in patterning the midbrain-hindbrain. Isoform Em is required for integrin-mediated cell matrix interaction during neurulation and for the morphogenetic movements leading to formation of the neural tube. Also mediates the effect of retinoic acid on primary neurogenesis. The polypeptide is Nuclear receptor subfamily 6 group A member 1 (Xenopus laevis (African clawed frog)).